A 179-amino-acid polypeptide reads, in one-letter code: uncharacterized protein (179 aa).

The next 4 membrane-spanning stretches (helical) occupy residues 33 to 53 (HIIALASKIAFTLALLYVILD), 63 to 83 (VMFIALFLGFVSYLSGDMLVL), 89 to 109 (ITASLADFGLSFVILWVFVLT), and 115 to 135 (FSPFGAALLSAACLTVFEYFF).

Its subcellular location is the cell membrane. This is an uncharacterized protein from Bacillus subtilis (strain 168).